A 74-amino-acid chain; its full sequence is Exodeoxyribonuclease 7 small subunit (74 aa).

It belongs to the XseB family. In terms of assembly, heterooligomer composed of large and small subunits.

Its subcellular location is the cytoplasm. It carries out the reaction Exonucleolytic cleavage in either 5'- to 3'- or 3'- to 5'-direction to yield nucleoside 5'-phosphates.. Functionally, bidirectionally degrades single-stranded DNA into large acid-insoluble oligonucleotides, which are then degraded further into small acid-soluble oligonucleotides. The sequence is that of Exodeoxyribonuclease 7 small subunit from Bdellovibrio bacteriovorus (strain ATCC 15356 / DSM 50701 / NCIMB 9529 / HD100).